A 581-amino-acid polypeptide reads, in one-letter code: Penicillin-binding protein activator LpoA (581 aa).

The first 26 residues, 1 to 26 (MLSILMQGLRLKKCFLPILVMFFLAG), serve as a signal peptide directing secretion. C27 carries N-palmitoyl cysteine lipidation. Residue C27 is the site of S-diacylglycerol cysteine attachment.

It belongs to the LpoA family. Interacts with PBP1a.

The protein resides in the cell outer membrane. Its function is as follows. Regulator of peptidoglycan synthesis that is essential for the function of penicillin-binding protein 1A (PBP1a). The sequence is that of Penicillin-binding protein activator LpoA from Histophilus somni (strain 129Pt) (Haemophilus somnus).